Here is a 149-residue protein sequence, read N- to C-terminus: Probable ubiquitin-conjugating enzyme E2 W (149 aa).

The 146-residue stretch at 4–149 folds into the UBC core domain; that stretch reads RYAKRLQKEL…VRWMFHDDTV (146 aa). The active-site Glycyl thioester intermediate is the cysteine 88.

This sequence belongs to the ubiquitin-conjugating enzyme family.

It carries out the reaction S-ubiquitinyl-[E1 ubiquitin-activating enzyme]-L-cysteine + [E2 ubiquitin-conjugating enzyme]-L-cysteine = [E1 ubiquitin-activating enzyme]-L-cysteine + S-ubiquitinyl-[E2 ubiquitin-conjugating enzyme]-L-cysteine.. The catalysed reaction is S-ubiquitinyl-[E1 ubiquitin-activating enzyme]-L-cysteine + [acceptor protein]-N-terminal-amino acid = [E1 ubiquitin-activating enzyme]-L-cysteine + N-terminal-ubiquitinyl-[acceptor protein].. It participates in protein modification; protein ubiquitination. Its function is as follows. Catalyzes the covalent attachment of ubiquitin to other proteins. The polypeptide is Probable ubiquitin-conjugating enzyme E2 W (ube2w) (Dictyostelium discoideum (Social amoeba)).